A 910-amino-acid chain; its full sequence is Leucine--tRNA ligase (910 aa).

Positions 50-60 (PYTNGSLHVGH) match the 'HIGH' region motif. Residues 611 to 615 (KISKS) carry the 'KMSKS' region motif. Lys-614 contacts ATP.

It belongs to the class-I aminoacyl-tRNA synthetase family.

It localises to the cytoplasm. It catalyses the reaction tRNA(Leu) + L-leucine + ATP = L-leucyl-tRNA(Leu) + AMP + diphosphate. The chain is Leucine--tRNA ligase from Thermoplasma volcanium (strain ATCC 51530 / DSM 4299 / JCM 9571 / NBRC 15438 / GSS1).